The following is a 179-amino-acid chain: Sperm surface protein Sp17 (179 aa).

A compositionally biased stretch (basic and acidic residues) spans 72–109; sequence HAFKDEPPEKSETQKIQPEKVAIEKETMPQETVKEKET. 2 disordered regions span residues 72-138 and 159-179; these read HAFK…EGLL and TRKE…ENNE. The span at 116–135 shows a compositional bias: acidic residues; it reads EPTEEPQKEEEEEEDEEDLE. Residues 143 to 172 enclose the IQ domain; it reads MQDAAVKIQAVFRGHKTRKEYLKKRDSTDE. Residues 161–170 show a composition bias toward basic and acidic residues; that stretch reads KEYLKKRDST.

In terms of assembly, homodimer. May interact with ROPN1. As to expression, testis- and sperm-specific.

It is found in the membrane. Functionally, sperm surface zona pellucida binding protein. Helps to bind spermatozoa to the zona pellucida with high affinity. Might function in binding zona pellucida and carbohydrates. This chain is Sperm surface protein Sp17 (SPA17), found in Monodelphis domestica (Gray short-tailed opossum).